The primary structure comprises 191 residues: Large ribosomal subunit protein uL6B (191 aa).

Belongs to the universal ribosomal protein uL6 family. In terms of assembly, component of the large ribosomal subunit (LSU). Mature yeast ribosomes consist of a small (40S) and a large (60S) subunit. The 40S small subunit contains 1 molecule of ribosomal RNA (18S rRNA) and 33 different proteins (encoded by 57 genes). The large 60S subunit contains 3 rRNA molecules (25S, 5.8S and 5S rRNA) and 46 different proteins (encoded by 81 genes).

It localises to the cytoplasm. Functionally, component of the ribosome, a large ribonucleoprotein complex responsible for the synthesis of proteins in the cell. The small ribosomal subunit (SSU) binds messenger RNAs (mRNAs) and translates the encoded message by selecting cognate aminoacyl-transfer RNA (tRNA) molecules. The large subunit (LSU) contains the ribosomal catalytic site termed the peptidyl transferase center (PTC), which catalyzes the formation of peptide bonds, thereby polymerizing the amino acids delivered by tRNAs into a polypeptide chain. The nascent polypeptides leave the ribosome through a tunnel in the LSU and interact with protein factors that function in enzymatic processing, targeting, and the membrane insertion of nascent chains at the exit of the ribosomal tunnel. The protein is Large ribosomal subunit protein uL6B of Saccharomyces cerevisiae (strain ATCC 204508 / S288c) (Baker's yeast).